A 107-amino-acid polypeptide reads, in one-letter code: Small leucine-rich protein 1 (107 aa).

The next 2 membrane-spanning stretches (helical) occupy residues 19–39 (AALV…LAMS) and 53–73 (FLFF…IAYF). Residues 85 to 107 (SQNCDRQHNPKDGSSLYQRMKWT) form a disordered region.

It localises to the membrane. This is Small leucine-rich protein 1 (SMLR1) from Homo sapiens (Human).